The chain runs to 72 residues: Large ribosomal subunit protein uL29 (72 aa).

Belongs to the universal ribosomal protein uL29 family.

This chain is Large ribosomal subunit protein uL29, found in Caldicellulosiruptor saccharolyticus (strain ATCC 43494 / DSM 8903 / Tp8T 6331).